Here is a 295-residue protein sequence, read N- to C-terminus: Acetylglutamate kinase (295 aa).

Substrate-binding positions include 66–67, R88, and N193; that span reads GG.

Belongs to the acetylglutamate kinase family. ArgB subfamily.

It localises to the cytoplasm. It catalyses the reaction N-acetyl-L-glutamate + ATP = N-acetyl-L-glutamyl 5-phosphate + ADP. Its pathway is amino-acid biosynthesis; L-arginine biosynthesis; N(2)-acetyl-L-ornithine from L-glutamate: step 2/4. Catalyzes the ATP-dependent phosphorylation of N-acetyl-L-glutamate. This Sinorhizobium fredii (strain NBRC 101917 / NGR234) protein is Acetylglutamate kinase.